The chain runs to 236 residues: Outer membrane protein P.III (236 aa).

The signal sequence occupies residues methionine 1–alanine 22. 4 tandem repeats follow at residues valine 69–proline 70, glutamate 71–proline 72, glutamate 73–proline 74, and alanine 75–proline 76. The segment at valine 69 to proline 76 is 4 X 2 AA tandem repeats of X-P. In terms of domain architecture, OmpA-like spans tyrosine 86–valine 223. Cysteine 185 and cysteine 208 are joined by a disulfide.

This sequence belongs to the outer membrane OOP (TC 1.B.6) superfamily.

It is found in the cell outer membrane. The sequence is that of Outer membrane protein P.III from Neisseria gonorrhoeae.